Here is a 108-residue protein sequence, read N- to C-terminus: Insertion element IS6110 uncharacterized 12.0 kDa protein (108 aa).

This sequence belongs to the transposase 8 family.

The protein is Insertion element IS6110 uncharacterized 12.0 kDa protein of Mycobacterium bovis (strain ATCC BAA-935 / AF2122/97).